The sequence spans 430 residues: MEF2-activating motif and SAP domain-containing transcriptional regulator (430 aa).

An MEF2-binding motif is present at residues 12–28; that stretch reads IIRSKFRSVLQLRIHRR. Disordered stretches follow at residues 84–172, 204–239, 280–301, and 330–416; these read CWSL…PLPH, KSML…RFRP, VATT…APAS, and EDQV…DLSD. Positions 87-103 are enriched in basic and acidic residues; sequence LKKESPKTSQHWREPKP. Residues 147 to 170 show a composition bias toward pro residues; that stretch reads QPPPRMKPTPLTPSPPGVPSPSPL. One can recognise an SAP domain in the interval 181–215; the sequence is LEELTVSELRQQLRLRGLPVSGTKSMLLERMRGGA. Basic and acidic residues predominate over residues 207–228; sequence LLERMRGGAPPRERPKARREDS. The interval 224–430 is transcription activation; that stretch reads RREDSAAGAP…RLWDLLEDPW (207 aa). 2 stretches are compositionally biased toward low complexity: residues 363-373 and 393-403; these read SSVFSSSLPSP and ALSGGPSLGCG.

In terms of assembly, interacts with MEF2C.

The protein localises to the nucleus. In terms of biological role, transcriptional coactivator. Stimulates the transcriptional activity of MEF2C. Stimulates MYOD1 activity in part via MEF2, resulting in an enhancement of skeletal muscle differentiation. This Bos taurus (Bovine) protein is MEF2-activating motif and SAP domain-containing transcriptional regulator (MAMSTR).